Here is a 170-residue protein sequence, read N- to C-terminus: MGVDQPLGENIITTSLDSLVNWARKSSIWPMTFGLACCAIEMMATGAAKHDLDRFGIIFRASPRQADCIIIAGTVTKKMLPVIKTVYEQMPEPKWVVAMGACACSGGVFDTYSVVQGIDEALPVDVYIPGCPPRPEALLYGLLKLQDKIANERNSFGSSIGLGERLEPAA.

Residues C37, C38, C102, and C131 each contribute to the [4Fe-4S] cluster site.

The protein belongs to the complex I 20 kDa subunit family. NDH-1 is composed of 14 different subunits. Subunits NuoB, C, D, E, F, and G constitute the peripheral sector of the complex. The cofactor is [4Fe-4S] cluster.

The protein resides in the cell inner membrane. The catalysed reaction is a quinone + NADH + 5 H(+)(in) = a quinol + NAD(+) + 4 H(+)(out). Functionally, NDH-1 shuttles electrons from NADH, via FMN and iron-sulfur (Fe-S) centers, to quinones in the respiratory chain. The immediate electron acceptor for the enzyme in this species is believed to be ubiquinone. Couples the redox reaction to proton translocation (for every two electrons transferred, four hydrogen ions are translocated across the cytoplasmic membrane), and thus conserves the redox energy in a proton gradient. This Citrifermentans bemidjiense (strain ATCC BAA-1014 / DSM 16622 / JCM 12645 / Bem) (Geobacter bemidjiensis) protein is NADH-quinone oxidoreductase subunit B.